Consider the following 231-residue polypeptide: 7-cyano-7-deazaguanine synthase (231 aa).

Residue 11–21 participates in ATP binding; the sequence is LSGGLDSATTM. Zn(2+)-binding residues include cysteine 195, cysteine 205, cysteine 208, and cysteine 211.

This sequence belongs to the QueC family. Requires Zn(2+) as cofactor.

The catalysed reaction is 7-carboxy-7-deazaguanine + NH4(+) + ATP = 7-cyano-7-deazaguanine + ADP + phosphate + H2O + H(+). It functions in the pathway purine metabolism; 7-cyano-7-deazaguanine biosynthesis. In terms of biological role, catalyzes the ATP-dependent conversion of 7-carboxy-7-deazaguanine (CDG) to 7-cyano-7-deazaguanine (preQ(0)). This chain is 7-cyano-7-deazaguanine synthase, found in Syntrophus aciditrophicus (strain SB).